We begin with the raw amino-acid sequence, 118 residues long: Ribonuclease P protein component (118 aa).

It belongs to the RnpA family. Consists of a catalytic RNA component (M1 or rnpB) and a protein subunit.

It carries out the reaction Endonucleolytic cleavage of RNA, removing 5'-extranucleotides from tRNA precursor.. In terms of biological role, RNaseP catalyzes the removal of the 5'-leader sequence from pre-tRNA to produce the mature 5'-terminus. It can also cleave other RNA substrates such as 4.5S RNA. The protein component plays an auxiliary but essential role in vivo by binding to the 5'-leader sequence and broadening the substrate specificity of the ribozyme. The polypeptide is Ribonuclease P protein component (Mycobacterium sp. (strain KMS)).